The chain runs to 479 residues: Monodehydroascorbate reductase 1, peroxisomal (479 aa).

At 1–3 (MGR) the chain is on the cytoplasmic side. Residues 4–24 (AFEYVILGGGVAAGYAALEFV) form a helical membrane-spanning segment. Residues 12-15 (GGVA), Glu-41, Arg-48, Lys-53, and 147-148 (RN) each bind FAD. Residues 25–445 (RRNGGASSQE…QATGGGGKPT (421 aa)) are Peroxisomal-facing. NAD(+) contacts are provided by residues 172–178 (GGYIGME), Arg-202, and Gly-260. NADP(+) is bound by residues 174–178 (YIGME), Arg-202, and Gly-260. Asp-297 lines the FAD pocket. 314–315 (EH) serves as a coordination point for NAD(+). 314 to 315 (EH) contacts NADP(+). FAD is bound at residue Val-316. Arg-320 provides a ligand contact to L-ascorbate. Residue Tyr-347 coordinates FAD. NAD(+) is bound at residue Tyr-347. Tyr-347 serves as a coordination point for NADP(+). Arg-349 contributes to the L-ascorbate binding site. The helical transmembrane segment at 446–466 (CAWHATVGVAAAVSIAAFACW) threads the bilayer. At 467 to 479 (YGWQAPYVLKRDF) the chain is on the cytoplasmic side.

The protein belongs to the FAD-dependent oxidoreductase family. FAD serves as cofactor.

The protein resides in the peroxisome membrane. The catalysed reaction is 2 monodehydro-L-ascorbate radical + NADH + H(+) = 2 L-ascorbate + NAD(+). Functionally, catalyzes the conversion of monodehydroascorbate to ascorbate, oxidizing NADH in the process. Ascorbate is a major antioxidant against reactive oxygen species (ROS) and nitric oxide (NO). In Oryza sativa subsp. japonica (Rice), this protein is Monodehydroascorbate reductase 1, peroxisomal.